The following is a 602-amino-acid chain: MHKYRTHNCNELQISDVETEVKLSGWVHRRRDHGNLVFIDLRDHYGITQIVFTDQNPQLMEDASRLRYESVITVRGTVVARSEDTINNTLPTGHVEVLAVEFSVESAADTLPFVINTEKDAPEESRLKHRFLDLRREKLHNNIILRSQIISHIRHLMTASGFTEFQTPILTASSPEGARDFLVPSRMHPGKFYALPQAPQQFKQLLMVSGFDRYFQIAPCFRDEDARADRSPGEFYQLDVEMSFVTQEDVFSTIEPVMYDLFTKFTDKKVSETPFVCIPYNESMLKYGSDKPDLRNPIIIADVTEIFRDSDFTIFRENIKKGSIVRAIPAPKAAALPRSFFDKMIEFAISEGAGGLGYIQFSETGEAKGPVVKFLSPQQLESLKATASISNGDAVFFASDKKEKAAKLAGKVRIRLGEELDLLEKDCFKFCWITDFPFYELNEETGKIDFSHNPFSMPQGGIDALEQAKTTEELLELTAYQYDIVCNGIELSSGAIRNHKPEIMYKAFSIAGYSEEEVDKRFGGMIRAFKFGAPPHGGIAPGIDRIVMLLAEATNIREIIAFPLNQQAEDLLMNAPSYVEDKALKELSIMLSPSARKNAEKE.

An L-aspartate-binding site is contributed by Glu-176. The aspartate stretch occupies residues 200–203 (QQFK). L-aspartate-binding residues include Arg-222 and His-452. Residue 222–224 (RDE) participates in ATP binding. Glu-490 is a binding site for ATP. L-aspartate is bound at residue Arg-497. 542–545 (GIDR) serves as a coordination point for ATP.

Belongs to the class-II aminoacyl-tRNA synthetase family. Type 1 subfamily. As to quaternary structure, homodimer.

The protein localises to the cytoplasm. The catalysed reaction is tRNA(Asx) + L-aspartate + ATP = L-aspartyl-tRNA(Asx) + AMP + diphosphate. In terms of biological role, aspartyl-tRNA synthetase with relaxed tRNA specificity since it is able to aspartylate not only its cognate tRNA(Asp) but also tRNA(Asn). Reaction proceeds in two steps: L-aspartate is first activated by ATP to form Asp-AMP and then transferred to the acceptor end of tRNA(Asp/Asn). In Rickettsia conorii (strain ATCC VR-613 / Malish 7), this protein is Aspartate--tRNA(Asp/Asn) ligase.